We begin with the raw amino-acid sequence, 716 residues long: Ubiquitin thioesterase zranb1-B (716 aa).

2 consecutive RanBP2-type zinc fingers follow at residues 3–33 and 82–111; these read DLGL…QRHN and TSSK…QRQQ. Residues Cys-10, Cys-13, Cys-24, Cys-27, Cys-88, Cys-91, Cys-102, and Cys-105 each coordinate Zn(2+). The tract at residues 113–143 is disordered; it reads SQQHSPLSPSETPQTSGSRPSPVTSDPCEEY. Residues 118-136 show a composition bias toward polar residues; the sequence is PLSPSETPQTSGSRPSPVT. Residues 152–181 form a RanBP2-type 3 zinc finger; it reads HAQRWPCSACTYENWPKSLRCVVCDHPKPS. The Zn(2+) site is built by Cys-158, Cys-161, Cys-172, and Cys-175. The segment at 178–228 is disordered; it reads PKPSGSPETPQQDSEAESATSPSIVNEQERENVRTAGGGGGGSRGRLRKLS. A compositionally biased stretch (polar residues) spans 183-203; that stretch reads SPETPQQDSEAESATSPSIVN. ANK repeat units lie at residues 268-298 and 321-348; these read RRSD…SGGD and FTLV…QQTA. Residues 440–600 enclose the OTU domain; it reads LYALWNRTAG…RGHFSALVAM (161 aa). Cys-451 acts as the Nucleophile in catalysis. The active-site Proton acceptor is the His-593.

Belongs to the peptidase C64 family.

It is found in the cytoplasm. The protein localises to the nucleus. It catalyses the reaction Thiol-dependent hydrolysis of ester, thioester, amide, peptide and isopeptide bonds formed by the C-terminal Gly of ubiquitin (a 76-residue protein attached to proteins as an intracellular targeting signal).. Ubiquitin thioesterase, which specifically hydrolyzes 'Lys-29'-linked and 'Lys-33'-linked diubiquitin. Also cleaves 'Lys-63'-linked chains, but with 40-fold less efficiency compared to 'Lys-29'-linked ones. Positive regulator of the Wnt signaling pathway that deubiquitinates apc protein, a negative regulator of Wnt-mediated transcription. Acts as a regulator of autophagy by mediating deubiquitination of pik3c3/vps34, thereby promoting autophagosome maturation. Plays a role in the regulation of cell morphology and cytoskeletal organization. Required in the stress fiber dynamics and cell migration. In Danio rerio (Zebrafish), this protein is Ubiquitin thioesterase zranb1-B (zranb1b).